The primary structure comprises 618 residues: Proline--tRNA ligase (618 aa).

It belongs to the class-II aminoacyl-tRNA synthetase family. ProS type 1 subfamily. Homodimer.

It localises to the cytoplasm. The enzyme catalyses tRNA(Pro) + L-proline + ATP = L-prolyl-tRNA(Pro) + AMP + diphosphate. Functionally, catalyzes the attachment of proline to tRNA(Pro) in a two-step reaction: proline is first activated by ATP to form Pro-AMP and then transferred to the acceptor end of tRNA(Pro). As ProRS can inadvertently accommodate and process non-cognate amino acids such as alanine and cysteine, to avoid such errors it has two additional distinct editing activities against alanine. One activity is designated as 'pretransfer' editing and involves the tRNA(Pro)-independent hydrolysis of activated Ala-AMP. The other activity is designated 'posttransfer' editing and involves deacylation of mischarged Ala-tRNA(Pro). The misacylated Cys-tRNA(Pro) is not edited by ProRS. The protein is Proline--tRNA ligase of Streptococcus pyogenes serotype M3 (strain ATCC BAA-595 / MGAS315).